We begin with the raw amino-acid sequence, 407 residues long: Amylovoran biosynthesis glycosyltransferase AmsK (407 aa).

It belongs to the glycosyltransferase group 1 family. Glycosyltransferase 4 subfamily.

It functions in the pathway glycan metabolism; exopolysaccharide biosynthesis. Its function is as follows. Involved in the biosynthesis of amylovoran which functions as a virulence factor. The sequence is that of Amylovoran biosynthesis glycosyltransferase AmsK (amsK) from Erwinia amylovora (Fire blight bacteria).